Reading from the N-terminus, the 324-residue chain is Geranylgeranyl pyrophosphate synthase dpmpD (324 aa).

Isopentenyl diphosphate contacts are provided by lysine 50, arginine 53, and histidine 82. Mg(2+)-binding residues include aspartate 89 and aspartate 93. Arginine 98 contributes to the dimethylallyl diphosphate binding site. An isopentenyl diphosphate-binding site is contributed by arginine 99. Lysine 176, threonine 177, and glutamine 210 together coordinate dimethylallyl diphosphate. Aspartate 213 is a Mg(2+) binding site. Dimethylallyl diphosphate contacts are provided by asparagine 217, lysine 227, and lysine 237.

This sequence belongs to the FPP/GGPP synthase family. Requires Mg(2+) as cofactor.

The enzyme catalyses isopentenyl diphosphate + dimethylallyl diphosphate = (2E)-geranyl diphosphate + diphosphate. The catalysed reaction is isopentenyl diphosphate + (2E)-geranyl diphosphate = (2E,6E)-farnesyl diphosphate + diphosphate. It catalyses the reaction isopentenyl diphosphate + (2E,6E)-farnesyl diphosphate = (2E,6E,10E)-geranylgeranyl diphosphate + diphosphate. It functions in the pathway secondary metabolite biosynthesis; terpenoid biosynthesis. In terms of biological role, geranylgeranyl pyrophosphate synthase; part of the gene cluster that mediates the biosynthesis of diterpenoid pyrones. The first step of the pathway is the synthesis of the alpha-pyrone moiety by the polyketide synthase dpmpA via condensation of one acetyl-CoA starter unit with 3 malonyl-CoA units and 2 methylations. The alpha-pyrone is then combined with geranylgeranyl pyrophosphate (GGPP) formed by the GGPP synthase dpmpD through the action of the prenyltransferase dpmpC to yield a linear alpha-pyrone diterpenoid. Subsequent steps in the diterpenoid pyrone biosynthetic pathway involve the decalin core formation, which is initiated by the epoxidation of the C10-C11 olefin by the FAD-dependent oxidoreductase dpmpE, and is followed by a cyclization cascade catalyzed by the terpene cyclase dpmpB. The short chain dehydrogenase/reductase dpmpG then oxidizes the 8S hydroxy group to a ketone and the short chain dehydrogenase/reductase dpmpH reduces the ketone to the 8R hydroxy group to yield higginsianin B. Higginsianin B is further methylated by the methyltransferase dpmpI to produce the intermediate named FDDP B. The cytochrome P450 monooxygenase dpmpJ then oxidizes the C-26 methyl to primary alcohol, producing the final diterpenoid pyrone with a C-26 primary alcohol on the gamma-pyrone moiety named FDDP C. The polypeptide is Geranylgeranyl pyrophosphate synthase dpmpD (Macrophomina phaseolina (strain MS6) (Charcoal rot fungus)).